Consider the following 952-residue polypeptide: MRGRGNARSLLVQAVSLRPATWHPCLDMGHLHRPSSRTSHRNLPHVFLLFLFVGPFNCLASYSRATELLYSLNEGLPAGVLIGSLAEDLRLLPRASGRQNQQLLHPERTASEGNPPLSFSLASGGLSGQYVTLNNRSGELHTSAQEIDREALCLDGGGGAAWAGSTSIASSPSSDSCLLLLDVLVLPQEYFRFVKVKIAIRDINDNAPQFPISEISVWVPENSPVNTRLAIEHPAVDPDVGINGVQTYRLLDYHGMFTLDVEENENGERTPYLIVMGALDRETQDQYVSIIIAEDGGSPPLLGSATLTIGISDINDNCPLFIDSQINVTVYGNATVGTPVATVQAVDRDLGTNAQITYSYSQKVPQETKDLFHLDEVTGVIKLSSKIGGSVLQTHKLTILANGPGCIPAVITALVSIIKVVFRPPEIVPRYIANEVDGVVYLKELEPVNTPIAFFTIRDPEGKYKINCFLDGEGPFRLAPYKPYNNEYLLETTKPMDYEVQSFYEIAVVAWNSEGFHVKRIIKVQLLDDNDNAPVFLQPLIELTIEENNAPNAFLTKLYATDADSGEMGRVSYFLGPDAPSYFSLDSVTGILTVSTQLDREEKEKYRYTVRAVDCGTPPRESVATVALTVLDKNDNSPRFINKDFSFFVPENFPGYGEIGVISVTDADAGRNGWVALSVMNQSDIFVIDTGKGMLRAKVSLDREQQSSYTLWVEAVDGGEPALSSTTKITILLLDINDNPPLVLFPQSNMSYLLVLPSTLPGSPVTEVYAVDKDTGMNAVIAYSIIGRRGPRPESFRIDPKTGNITLEEALLQTDYGLHRLLVKVSDHGYPEPLHSTVMVNLFVNDTVSNESYIESLLRKEPEINIEEKEPQISIEPTHRKVESMSCMPTLVALSVISLGSITLVTGMGIYICLRKGKKHHREDDNLEVQIPLKGKIDLCMRERKPVDISNI.

The N-terminal stretch at 1-60 (MRGRGNARSLLVQAVSLRPATWHPCLDMGHLHRPSSRTSHRNLPHVFLLFLFVGPFNCLA) is a signal peptide. Residues 61 to 891 (SYSRATELLY…VESMSCMPTL (831 aa)) lie on the Extracellular side of the membrane. Cadherin domains lie at 64–210 (RATE…APQF), 211–321 (PISE…CPLF), 322–536 (IDSQ…APVF), 537–640 (LQPL…SPRF), 641–743 (INKD…PPLV), and 747–864 (QSNM…EPEI). N-linked (GlcNAc...) asparagine glycosylation is present at N135. Residues N327 and N333 are each glycosylated (N-linked (GlcNAc...) asparagine). N-linked (GlcNAc...) asparagine glycosylation is found at N681, N749, N804, N845, and N850. Residues 892–912 (VALSVISLGSITLVTGMGIYI) traverse the membrane as a helical segment. Residues 913-952 (CLRKGKKHHREDDNLEVQIPLKGKIDLCMRERKPVDISNI) are Cytoplasmic-facing.

Its subcellular location is the cell membrane. Potential calcium-dependent cell-adhesion protein. This Mus musculus (Mouse) protein is Protocadherin-20 (Pcdh20).